Here is a 223-residue protein sequence, read N- to C-terminus: Putative N-acetylmannosamine-6-phosphate 2-epimerase (223 aa).

Belongs to the NanE family.

The enzyme catalyses an N-acyl-D-glucosamine 6-phosphate = an N-acyl-D-mannosamine 6-phosphate. Its pathway is amino-sugar metabolism; N-acetylneuraminate degradation; D-fructose 6-phosphate from N-acetylneuraminate: step 3/5. Its function is as follows. Converts N-acetylmannosamine-6-phosphate (ManNAc-6-P) to N-acetylglucosamine-6-phosphate (GlcNAc-6-P). The polypeptide is Putative N-acetylmannosamine-6-phosphate 2-epimerase (Staphylococcus haemolyticus (strain JCSC1435)).